Consider the following 365-residue polypeptide: Decapping nuclease RAI1 (365 aa).

Position 165 (Glu165) interacts with a divalent metal cation. Substrate-binding residues include Cys197 and Glu214. 3 residues coordinate a divalent metal cation: Asp216, Glu234, and Leu235. 2 residues coordinate substrate: Lys236 and Gln260.

The protein belongs to the DXO/Dom3Z family. As to quaternary structure, interacts with rat1; the interaction is direct, stabilizes rat1 protein structure and stimulates its exoribonuclease activity. The interaction also stimulates rai1 pyrophosphohydrolase activity, probably by recruiting it to mRNA substrates. Requires a divalent metal cation as cofactor.

It localises to the nucleus. It carries out the reaction a 5'-end NAD(+)-phospho-ribonucleoside in mRNA + H2O = a 5'-end phospho-ribonucleoside in mRNA + NAD(+) + H(+). It catalyses the reaction a 5'-end (N(7)-methyl 5'-triphosphoguanosine)-ribonucleoside-ribonucleotide in mRNA + H2O = a (N(7)-methyl 5'-triphosphoguanosine)-nucleoside + a 5'-end phospho-ribonucleoside in mRNA + H(+). The catalysed reaction is a 5'-end triphospho-ribonucleoside in mRNA + H2O = a 5'-end phospho-ribonucleoside in mRNA + diphosphate + H(+). Its function is as follows. Decapping enzyme for NAD-capped RNAs: specifically hydrolyzes the nicotinamide adenine dinucleotide (NAD) cap from a subset of RNAs by removing the entire NAD moiety from the 5'-end of an NAD-capped RNA. The NAD-cap is present at the 5'-end of some RNAs and snoRNAs. In contrast to the canonical 5'-end N7 methylguanosine (m7G) cap, the NAD cap promotes mRNA decay. Also acts as a non-canonical decapping enzyme that removes the entire cap structure of m7G capped or incompletely capped RNAs. Has decapping activity toward incomplete 5'-end m7G cap mRNAs such as unmethylated 5'-end-capped RNA (cap0), while it has no activity toward 2'-O-ribose methylated m7G cap (cap1). Also possesses RNA 5'-pyrophosphohydrolase activity by hydrolyzing the 5'-end triphosphate to release pyrophosphates. Stimulates exoribonuclease activity of Rat1, allowing it to degrade RNAs with stable secondary structure more effectively. This Aspergillus fumigatus (strain ATCC MYA-4609 / CBS 101355 / FGSC A1100 / Af293) (Neosartorya fumigata) protein is Decapping nuclease RAI1 (rai1).